A 292-amino-acid chain; its full sequence is uncharacterized protein (292 aa).

The protein localises to the virion. This is an uncharacterized protein from Acanthamoeba polyphaga (Amoeba).